Here is a 118-residue protein sequence, read N- to C-terminus: UPF0148 protein M1627_1409 (118 aa).

It belongs to the UPF0148 family.

The polypeptide is UPF0148 protein M1627_1409 (Saccharolobus islandicus (strain M.16.27) (Sulfolobus islandicus)).